The following is a 376-amino-acid chain: D-alanine--D-alanine ligase (376 aa).

Residues 153 to 366 (KLLLAGQGLP…YPELVHRLIQ (214 aa)) form the ATP-grasp domain. 185–240 (VEALGYPVFVKPARAGSSIGITRVTSREGLAAAVAEAVSHDPKVVVEAALVGREIE) contributes to the ATP binding site. Positions 317, 333, and 335 each coordinate Mg(2+).

The protein belongs to the D-alanine--D-alanine ligase family. The cofactor is Mg(2+). Mn(2+) serves as cofactor.

It localises to the cytoplasm. It catalyses the reaction 2 D-alanine + ATP = D-alanyl-D-alanine + ADP + phosphate + H(+). Its pathway is cell wall biogenesis; peptidoglycan biosynthesis. In terms of biological role, cell wall formation. The sequence is that of D-alanine--D-alanine ligase from Kineococcus radiotolerans (strain ATCC BAA-149 / DSM 14245 / SRS30216).